The sequence spans 379 residues: MPLAAEPDDAHEERENQQLLITTKGGPGLEGLVVGSYCHDVLIRGGRIVGETLGGAAAFVSNVLDAASPQGAALNETSPFVVVAKVGHDFIYARAPASARHPPLLCSSPTTSFHAQFSETAASAHAPDRELRRVRACDPIYPADLPDRRFAYGLAVGVAGEVLPETLEQMIRLCRTVLVDAQALIRAFDGDGAVGHVALGDTPYARLLPRVAFVKASSEEAPYVGVETTRRQCCVIVTEGRDGCRLYWDGGEAHVAPFPAVQVDPTGAGDSFLAGFAAGLLWGLSATDAALLGNFFGAAAVSQVGVPTFHPKMLQAVKEILEEKTRKRSSPCMNGASFTLEKSNMHNELHAALQEAAVLMSEQQQADPANGSGGDICSA.

Residues Ser-217, 267–270 (GAGD), and Asn-294 contribute to the ATP site. Residue Asp-270 is the Proton acceptor of the active site.

This sequence belongs to the carbohydrate kinase pfkB family.

It catalyses the reaction myo-inositol + ATP = 1D-myo-inositol 3-phosphate + ADP + H(+). In terms of biological role, kinase that phosphorylates myo-inositol to produce multiple myo-inositol monophosphates, Ins(1)P, Ins(3)P, Ins(4)P, Ins(5)P and Ins(6)P. Participates in phytic acid biosynthesis in developing seeds. Phytic acid is the primary storage form of phosphorus in cereal grains and other plant seeds. The protein is Inositol 3-kinase of Zea mays (Maize).